The following is a 308-amino-acid chain: Leucine-rich repeat-containing protein 59 (308 aa).

Topologically, residues 1–248 (MARANGRSQN…LARRQSRLRK (248 aa)) are cytoplasmic. LRR repeat units lie at residues 10 to 31 (NLRD…SEVP), 40 to 61 (KATA…FCNL), 63 to 84 (YIVR…FGRL), 86 to 107 (NLQH…FAQL), and 109 to 128 (SLKW…AKVA). Positions 154–223 (DHERELQRKL…NNNKKKAEEE (70 aa)) form a coiled coil. Composition is skewed to basic and acidic residues over residues 170-187 (KQRL…DREL), 194-203 (QQKERKRRDY), and 218-237 (KKAE…PKEK). The disordered stretch occupies residues 170 to 240 (KQRLEAQQRV…VPTPKEKKLA (71 aa)). Residues 249 to 269 (IACILLFGLMVALLGVVACRF) traverse the membrane as a helical segment. At 270 to 308 (TDLKTFEVCRSVNAVYKETLSALHSNPVLERFLQDPSSQ) the chain is on the lumenal side.

Interacts with SGO1.

Its subcellular location is the microsome membrane. It is found in the endoplasmic reticulum membrane. The protein localises to the nucleus envelope. Functionally, required for nuclear import of FGF1. The sequence is that of Leucine-rich repeat-containing protein 59 (lrrc59) from Xenopus tropicalis (Western clawed frog).